The following is a 189-amino-acid chain: DnaJ homolog subfamily C member 5G (189 aa).

The region spanning 17–98 (SLYAVLDLKK…KKRKIYDQHG (82 aa)) is the J domain. Positions 154–189 (PEQDSGRKYQQNVQSQPPRSGAKCDFRSEENSEDDF) are disordered. A compositionally biased stretch (polar residues) spans 161-171 (KYQQNVQSQPP).

In terms of processing, palmitoylated. In terms of tissue distribution, testis specific.

The protein localises to the membrane. This is DnaJ homolog subfamily C member 5G (DNAJC5G) from Homo sapiens (Human).